The sequence spans 400 residues: DNA primase small subunit PriS (400 aa).

Active-site residues include Asp98, Asp100, and Asp306.

Belongs to the eukaryotic-type primase small subunit family. Heterodimer of a small subunit (PriS) and a large subunit (PriL). Requires Mg(2+) as cofactor. It depends on Mn(2+) as a cofactor.

Functionally, catalytic subunit of DNA primase, an RNA polymerase that catalyzes the synthesis of short RNA molecules used as primers for DNA polymerase during DNA replication. The small subunit contains the primase catalytic core and has DNA synthesis activity on its own. Binding to the large subunit stabilizes and modulates the activity, increasing the rate of DNA synthesis while decreasing the length of the DNA fragments, and conferring RNA synthesis capability. The DNA polymerase activity may enable DNA primase to also catalyze primer extension after primer synthesis. May also play a role in DNA repair. This Methanocella arvoryzae (strain DSM 22066 / NBRC 105507 / MRE50) protein is DNA primase small subunit PriS.